The chain runs to 114 residues: Acetyltransferase At1g77540 (114 aa).

An N-acetylthreonine modification is found at Thr2. The 89-residue stretch at 18-106 folds into the N-acetyltransferase domain; it reads KIVWNEGKRR…RNPSWKPLIH (89 aa). CoA-binding positions include 52–55 and 61–66; these read HTYV and GLGLAS. Cys87 serves as the catalytic Nucleophile. CoA-binding positions include 88–89, Thr93, and Arg97; that span reads SY.

It localises to the peroxisome. Possesses in vitro histone acetyltransferase activity with histones H3 and H4. This Arabidopsis thaliana (Mouse-ear cress) protein is Acetyltransferase At1g77540.